Reading from the N-terminus, the 1081-residue chain is Isoleucine--tRNA ligase (1081 aa).

Positions 53-63 (PFATGLPHYGN) match the 'HIGH' region motif. A 'KMSKS' region motif is present at residues 607-611 (KMSKS). Lys-610 is an ATP binding site.

The protein belongs to the class-I aminoacyl-tRNA synthetase family.

The catalysed reaction is tRNA(Ile) + L-isoleucine + ATP = L-isoleucyl-tRNA(Ile) + AMP + diphosphate. This chain is Isoleucine--tRNA ligase (ILSA), found in Tetrahymena thermophila.